A 223-amino-acid chain; its full sequence is Cytochrome c biogenesis ATP-binding export protein CcmA (223 aa).

Positions 20–222 (LAAHALTYSR…PTRLLHLKKA (203 aa)) constitute an ABC transporter domain. 52 to 59 (GPNGIGKT) is an ATP binding site.

It belongs to the ABC transporter superfamily. CcmA exporter (TC 3.A.1.107) family. As to quaternary structure, the complex is composed of two ATP-binding proteins (CcmA) and two transmembrane proteins (CcmB).

The protein resides in the cell inner membrane. It catalyses the reaction heme b(in) + ATP + H2O = heme b(out) + ADP + phosphate + H(+). Its function is as follows. Part of the ABC transporter complex CcmAB involved in the biogenesis of c-type cytochromes; once thought to export heme, this seems not to be the case, but its exact role is uncertain. Responsible for energy coupling to the transport system. The chain is Cytochrome c biogenesis ATP-binding export protein CcmA from Xylella fastidiosa (strain 9a5c).